A 247-amino-acid polypeptide reads, in one-letter code: UPF0659 protein C216.03 (247 aa).

Belongs to the UPF0659 family.

It localises to the cytoplasm. The protein resides in the nucleus. The protein is UPF0659 protein C216.03 of Schizosaccharomyces pombe (strain 972 / ATCC 24843) (Fission yeast).